A 325-amino-acid chain; its full sequence is D-alanine--D-alanine ligase (325 aa).

The ATP-grasp domain occupies 107 to 311 (KRLLLSESLP…YEALCVEVLK (205 aa)). 137–192 (VDTLGLPLIVKPAREGSSLGLSKVTERAAMAAAVALAEKMDADILCEQFISGDEVT) contributes to the ATP binding site. 3 residues coordinate Mg(2+): Asp-264, Glu-278, and Asn-280.

Belongs to the D-alanine--D-alanine ligase family. Mg(2+) is required as a cofactor. Mn(2+) serves as cofactor.

It is found in the cytoplasm. It carries out the reaction 2 D-alanine + ATP = D-alanyl-D-alanine + ADP + phosphate + H(+). It functions in the pathway cell wall biogenesis; peptidoglycan biosynthesis. Cell wall formation. The polypeptide is D-alanine--D-alanine ligase (Polaromonas naphthalenivorans (strain CJ2)).